Consider the following 143-residue polypeptide: MSLSDTDKAVVKAIWAKISPKADEIGAEALARMLTVYPQTKTYFSHWADLSPGSGPVKKHGKTIMGAVGEAISKIDDLVGGLAALSELHAFKLRVDPANFKILSHNVIVVIAMLFPADFTPEVHVSVDKFFNNLALALSEKYR.

Ser2 is modified (N-acetylserine). In terms of domain architecture, Globin spans 2–143; sequence SLSDTDKAVV…LALALSEKYR (142 aa). His60 provides a ligand contact to O2. His89 lines the heme b pocket.

Belongs to the globin family. As to quaternary structure, heterotetramer of two alpha chains and two beta chains. In terms of tissue distribution, red blood cells.

Functionally, involved in oxygen transport from gills to the various peripheral tissues. This Danio rerio (Zebrafish) protein is Hemoglobin subunit alpha (hbaa1).